The primary structure comprises 244 residues: Agamous-like MADS-box protein MADS3 (244 aa).

The MADS-box domain maps to 1–61 (MGRGRVELKR…GKLYEFGSAG (61 aa)). The 91-residue stretch at 85–175 (TQSWYQEVSK…KLKLEAEGQS (91 aa)) folds into the K-box domain. The disordered stretch occupies residues 180 to 206 (QGSWNPSTATAGNSSFPVHPSQSNPMD). Polar residues predominate over residues 181–204 (GSWNPSTATAGNSSFPVHPSQSNP).

In terms of tissue distribution, expressed in flowers and seeds.

It is found in the nucleus. Probable transcription factor involved in flower development. The chain is Agamous-like MADS-box protein MADS3 from Vitis vinifera (Grape).